A 76-amino-acid polypeptide reads, in one-letter code: Translational regulator CsrA (76 aa).

It belongs to the CsrA/RsmA family. Homodimer; the beta-strands of each monomer intercalate to form a hydrophobic core, while the alpha-helices form wings that extend away from the core.

Its subcellular location is the cytoplasm. Functionally, a translational regulator that binds mRNA to regulate translation initiation and/or mRNA stability. Usually binds in the 5'-UTR at or near the Shine-Dalgarno sequence preventing ribosome-binding, thus repressing translation. Its main target seems to be the major flagellin gene, while its function is anatagonized by FliW. In Syntrophomonas wolfei subsp. wolfei (strain DSM 2245B / Goettingen), this protein is Translational regulator CsrA.